The sequence spans 344 residues: GTPase Obg (344 aa).

An Obg domain is found at 1-159; sequence MKFLDQAKVY…RWIWLRLKLI (159 aa). Residues 160–327 form the OBG-type G domain; sequence ADAGLVGLPN…ALRLLLSVVE (168 aa). GTP is bound by residues 166 to 173, 191 to 195, 212 to 215, 279 to 282, and 308 to 310; these read GLPNAGKS, FTTLH, DIPG, SKVD, and SAQ. Positions 173 and 193 each coordinate Mg(2+).

The protein belongs to the TRAFAC class OBG-HflX-like GTPase superfamily. OBG GTPase family. In terms of assembly, monomer. The cofactor is Mg(2+).

It localises to the cytoplasm. Its function is as follows. An essential GTPase which binds GTP, GDP and possibly (p)ppGpp with moderate affinity, with high nucleotide exchange rates and a fairly low GTP hydrolysis rate. Plays a role in control of the cell cycle, stress response, ribosome biogenesis and in those bacteria that undergo differentiation, in morphogenesis control. The polypeptide is GTPase Obg (Xanthobacter autotrophicus (strain ATCC BAA-1158 / Py2)).